The primary structure comprises 836 residues: Tuftelin-interacting protein 11 (836 aa).

Over residues 1–13 (MSLSHLYRDGEGH) the composition is skewed to basic and acidic residues. 3 disordered regions span residues 1-31 (MSLSHLYRDGEGHMDDDEDERENFEITDWDL), 54-73 (WAERDSDEERPSFGGKRARD), and 85-136 (LKKG…AGGT). The interval 1–50 (MSLSHLYRDGEGHMDDDEDERENFEITDWDLQNEFNPNRQRHWQTKEEAT) is required for interaction with DHX15. The residue at position 2 (S2) is a Phosphoserine. Acidic residues predominate over residues 14 to 28 (MDDDEDERENFEITD). A compositionally biased stretch (basic and acidic residues) spans 54–64 (WAERDSDEERP). A phosphoserine mark is found at S59 and S98. Over residues 91-102 (EEAELEDSDDEE) the composition is skewed to acidic residues. The segment covering 103–116 (KPVKQDEFPKDFGP) has biased composition (basic and acidic residues). S144 is subject to Phosphoserine. In terms of domain architecture, G-patch spans 149-195 (TKGIGQKLLQKMGYVPGRGLGKNAQGIINPIEAKQRKGKGAVGAYGS). The segment at 183-236 (QRKGKGAVGAYGSERTTQSLQDFPVVDSEEEAEEEFQKELSQWRKDPSGSKKKP) is disordered. S210 carries the post-translational modification Phosphoserine. Residues 217–231 (EFQKELSQWRKDPSG) show a composition bias toward basic and acidic residues. A Nuclear localization signal motif is present at residues 699 to 704 (VKDKFN). A required for nuclear speckle localization region spans residues 709-733 (IMNRAVSSNVGAYMQPGARENIAYL).

Belongs to the TFP11/STIP family. Identified in the spliceosome C complex. Found in the Intron Large (IL) complex, a post-mRNA release spliceosomal complex containing the excised intron, U2, U5 and U6 snRNPs, and splicing factors. Interacts with TUFT1. Interacts with DHX15; indicative for a recruitment of DHX15 to the IL complex. Interacts with GCFC2.

It is found in the cytoplasm. The protein resides in the nucleus. Functionally, involved in pre-mRNA splicing, specifically in spliceosome disassembly during late-stage splicing events. Intron turnover seems to proceed through reactions in two lariat-intron associated complexes termed Intron Large (IL) and Intron Small (IS). In cooperation with DHX15 seems to mediate the transition of the U2, U5 and U6 snRNP-containing IL complex to the snRNP-free IS complex leading to efficient debranching and turnover of excised introns. May play a role in the differentiation of ameloblasts and odontoblasts or in the forming of the enamel extracellular matrix. In Sus scrofa (Pig), this protein is Tuftelin-interacting protein 11 (TFIP11).